The chain runs to 348 residues: Outer membrane protein assembly factor BamC (348 aa).

The first 19 residues, 1–19 (MKYSHQLVIGSLAVFVLTA), serve as a signal peptide directing secretion. Residue Cys20 is the site of N-palmitoyl cysteine attachment. Residue Cys20 is the site of S-diacylglycerol cysteine attachment.

This sequence belongs to the BamC family. As to quaternary structure, part of the Bam complex.

It is found in the cell outer membrane. Functionally, part of the outer membrane protein assembly complex, which is involved in assembly and insertion of beta-barrel proteins into the outer membrane. In Vibrio atlanticus (strain LGP32) (Vibrio splendidus (strain Mel32)), this protein is Outer membrane protein assembly factor BamC.